A 432-amino-acid polypeptide reads, in one-letter code: MRVVILGSGVVGVASAWYLNQAGHEVTVIDREPGAALETSAANAGQISPGYAAPWAAPGVPLKAIKWMFQRHAPLVVRLDGTQFQLKWMWQMLRNCDTSHYMENKGRMVRLAEYSRDCLKALRAETNIQYEGRQGGTLQLFRTEQQYENATRDIAVLEDAGVPYQLLESSRLAEVEPALAEVAHKLTGGLQLPNDETGDCQLFTQNLARMAEQAGVKFRFNTPVDQLLCDGEQIYGVKCGDEVIKADAYVMAFGSYSTAMLKGIVDIPVYPLKGYSLTIPIAQEDGAPVSTILDETYKIAITRFDNRMRVGGMAEIVGFNTELLQPRRETLEMVVRDLYPRGGHVEQATFWTGLRPMTPDGTPVVGRTRFKNLWLNTGHGTLGWTMACGSGQLLSDLLSGRTPAIPYEDLSVARYSRGFTPSRPGHLHGAHS.

3–17 (VVILGSGVVGVASAW) contributes to the FAD binding site.

It belongs to the DadA oxidoreductase family. FAD is required as a cofactor.

The enzyme catalyses a D-alpha-amino acid + A + H2O = a 2-oxocarboxylate + AH2 + NH4(+). It participates in amino-acid degradation; D-alanine degradation; NH(3) and pyruvate from D-alanine: step 1/1. Oxidative deamination of D-amino acids. This Shigella dysenteriae serotype 1 (strain Sd197) protein is D-amino acid dehydrogenase.